Consider the following 423-residue polypeptide: Torsin-4A (423 aa).

A disordered region spans residues 47–68; that stretch reads PGGGPDVGTGAPRPGCSPRAPR. Serine 63 and serine 81 each carry phosphoserine. At threonine 89 the chain carries Phosphothreonine. Serine 106 is modified (phosphoserine). The chain crosses the membrane as a helical span at residues 122–138; the sequence is CLLLLVAIVGFQVLNAI. An ATP-binding site is contributed by 194–201; sequence GPSGVGKS.

This sequence belongs to the ClpA/ClpB family. Torsin subfamily.

The protein localises to the membrane. The polypeptide is Torsin-4A (TOR4A) (Homo sapiens (Human)).